The chain runs to 915 residues: Probable LRR receptor-like serine/threonine-protein kinase At2g16250 (915 aa).

Residues 1–28 (MVDQRRSALGFVLLLLCLVLFFDCVVVG) form the signal peptide. Over 29 to 451 (QTQSRFSEKL…ISRRTVIILA (423 aa)) the chain is Extracellular. Residues Asn71, Asn78, Asn101, Asn109, Asn150, Asn158, and Asn177 are each glycosylated (N-linked (GlcNAc...) asparagine). LRR repeat units follow at residues 102–125 (LTRL…WFGV), 127–150 (LLAL…TLGN), 151–174 (LTSL…SLGQ), 176–198 (LNLS…SFSS), 199–223 (LKNL…LGAL), 225–247 (KLIH…LGDL), 248–271 (VNLV…LRKL), 272–295 (SKLQ…LFSA), 297–320 (SQLQ…CWSL), 321–344 (PKLR…SYDS), and 366–390 (LRRF…VTGE). A glycan (N-linked (GlcNAc...) asparagine) is linked at Asn230. Residue Asn332 is glycosylated (N-linked (GlcNAc...) asparagine). N-linked (GlcNAc...) asparagine glycans are attached at residues Asn391, Asn429, and Asn437. Residues 452-472 (AVGGGVAFILLFVILPIILVL) traverse the membrane as a helical segment. Residues 473-915 (CMRHRRRAAQ…AAYGVVEDNL (443 aa)) are Cytoplasmic-facing. Residues 482–503 (QRGNNDRPKPAGEASQQPPKGA) are disordered. In terms of domain architecture, Protein kinase spans 527–811 (FNDANLIKRG…IVNALENPLK (285 aa)). ATP-binding positions include 533–541 (IKRGHSGNL) and Lys555. Asp657 serves as the catalytic Proton acceptor. The segment at 851 to 915 (TAVQAGATTS…AAYGVVEDNL (65 aa)) is disordered. The span at 859-870 (TSGGGGGGGGNG) shows a compositional bias: gly residues. The span at 871 to 892 (LRNSGSQGSSGRNNNNNGNSSS) shows a compositional bias: low complexity.

This sequence belongs to the protein kinase superfamily. Ser/Thr protein kinase family.

It localises to the membrane. The catalysed reaction is L-seryl-[protein] + ATP = O-phospho-L-seryl-[protein] + ADP + H(+). The enzyme catalyses L-threonyl-[protein] + ATP = O-phospho-L-threonyl-[protein] + ADP + H(+). The chain is Probable LRR receptor-like serine/threonine-protein kinase At2g16250 from Arabidopsis thaliana (Mouse-ear cress).